Here is a 376-residue protein sequence, read N- to C-terminus: Transmembrane protein 183A (376 aa).

Disordered regions lie at residues 1-20 (MARG…AMPK) and 100-127 (MDAQ…ELDG). A helical membrane pass occupies residues 300–320 (LNFIFIPIVMGMIFTLFTINV).

The protein belongs to the TMEM183 family.

It localises to the membrane. The polypeptide is Transmembrane protein 183A (TMEM183A) (Homo sapiens (Human)).